Consider the following 198-residue polypeptide: Pyridoxal 5'-phosphate synthase subunit PdxT (198 aa).

L-glutamine is bound at residue 50-52; the sequence is GES. C82 serves as the catalytic Nucleophile. Residues R111 and 140–141 contribute to the L-glutamine site; that span reads IR. Active-site charge relay system residues include H177 and E179.

It belongs to the glutaminase PdxT/SNO family. As to quaternary structure, in the presence of PdxS, forms a dodecamer of heterodimers. Only shows activity in the heterodimer.

The catalysed reaction is aldehydo-D-ribose 5-phosphate + D-glyceraldehyde 3-phosphate + L-glutamine = pyridoxal 5'-phosphate + L-glutamate + phosphate + 3 H2O + H(+). The enzyme catalyses L-glutamine + H2O = L-glutamate + NH4(+). It functions in the pathway cofactor biosynthesis; pyridoxal 5'-phosphate biosynthesis. Functionally, catalyzes the hydrolysis of glutamine to glutamate and ammonia as part of the biosynthesis of pyridoxal 5'-phosphate. The resulting ammonia molecule is channeled to the active site of PdxS. This chain is Pyridoxal 5'-phosphate synthase subunit PdxT, found in Leifsonia xyli subsp. xyli (strain CTCB07).